Here is a 130-residue protein sequence, read N- to C-terminus: Small ribosomal subunit protein uS8 (130 aa).

This sequence belongs to the universal ribosomal protein uS8 family. In terms of assembly, part of the 30S ribosomal subunit.

Functionally, one of the primary rRNA binding proteins, it binds directly to 16S rRNA central domain where it helps coordinate assembly of the platform of the 30S subunit. This is Small ribosomal subunit protein uS8 from Thermococcus gammatolerans (strain DSM 15229 / JCM 11827 / EJ3).